The following is an 88-amino-acid chain: Large ribosomal subunit protein bL27 (88 aa).

Residues 1–21 (MAHKKGQGSTQNNRDSAGRRL) are disordered.

Belongs to the bacterial ribosomal protein bL27 family.

The protein is Large ribosomal subunit protein bL27 of Helicobacter pylori (strain P12).